Here is a 424-residue protein sequence, read N- to C-terminus: Deoxyguanosinetriphosphate triphosphohydrolase-like protein (424 aa).

Positions 1–10 are enriched in pro residues; the sequence is MEGTAPPTPY. Residues 1–31 form a disordered region; the sequence is MEGTAPPTPYDPASVARYAPEPDKRPGRTAF. Over residues 20-31 the composition is skewed to basic and acidic residues; the sequence is PEPDKRPGRTAF. Residues 70–220 form the HD domain; it reads RLTHSLECAQ…MDWADDVAYS (151 aa).

Belongs to the dGTPase family. Type 2 subfamily.

This Streptomyces coelicolor (strain ATCC BAA-471 / A3(2) / M145) protein is Deoxyguanosinetriphosphate triphosphohydrolase-like protein.